The chain runs to 119 residues: Ribonuclease P protein component (119 aa).

It belongs to the RnpA family. In terms of assembly, consists of a catalytic RNA component (M1 or rnpB) and a protein subunit.

The enzyme catalyses Endonucleolytic cleavage of RNA, removing 5'-extranucleotides from tRNA precursor.. Functionally, RNaseP catalyzes the removal of the 5'-leader sequence from pre-tRNA to produce the mature 5'-terminus. It can also cleave other RNA substrates such as 4.5S RNA. The protein component plays an auxiliary but essential role in vivo by binding to the 5'-leader sequence and broadening the substrate specificity of the ribozyme. The sequence is that of Ribonuclease P protein component from Streptococcus equi subsp. zooepidemicus (strain MGCS10565).